A 326-amino-acid polypeptide reads, in one-letter code: Zona pellucida-binding protein 2 (326 aa).

Residues 1–20 (MLAWALLSAVLWSLAGVGSA) form the signal peptide. Residues Asn86, Asn220, and Asn256 are each glycosylated (N-linked (GlcNAc...) asparagine).

Belongs to the zona pellucida-binding protein Sp38 family. Post-translationally, N-glycosylated.

The protein resides in the secreted. It is found in the cytoplasmic vesicle. The protein localises to the secretory vesicle. It localises to the acrosome. Its function is as follows. Is implicated in sperm-oocyte interaction during fertilization. The protein is Zona pellucida-binding protein 2 (Zpbp2) of Rattus norvegicus (Rat).